Consider the following 237-residue polypeptide: Leucyl/phenylalanyl-tRNA--protein transferase (237 aa).

This sequence belongs to the L/F-transferase family.

Its subcellular location is the cytoplasm. It catalyses the reaction N-terminal L-lysyl-[protein] + L-leucyl-tRNA(Leu) = N-terminal L-leucyl-L-lysyl-[protein] + tRNA(Leu) + H(+). It carries out the reaction N-terminal L-arginyl-[protein] + L-leucyl-tRNA(Leu) = N-terminal L-leucyl-L-arginyl-[protein] + tRNA(Leu) + H(+). The catalysed reaction is L-phenylalanyl-tRNA(Phe) + an N-terminal L-alpha-aminoacyl-[protein] = an N-terminal L-phenylalanyl-L-alpha-aminoacyl-[protein] + tRNA(Phe). In terms of biological role, functions in the N-end rule pathway of protein degradation where it conjugates Leu, Phe and, less efficiently, Met from aminoacyl-tRNAs to the N-termini of proteins containing an N-terminal arginine or lysine. The polypeptide is Leucyl/phenylalanyl-tRNA--protein transferase (Shewanella baltica (strain OS155 / ATCC BAA-1091)).